A 522-amino-acid polypeptide reads, in one-letter code: GMP synthase [glutamine-hydrolyzing] (522 aa).

The 200-residue stretch at 5-204 (YILIIDFGSQ…VKNICNYTNV (200 aa)) folds into the Glutamine amidotransferase type-1 domain. The active-site Nucleophile is the cysteine 82. Residues histidine 178 and glutamate 180 contribute to the active site. A GMPS ATP-PPase domain is found at 205 to 397 (IKYSLSIRKI…IGIPKEIIFR (193 aa)). 232-238 (SGGIDSF) is a binding site for ATP.

As to quaternary structure, homodimer.

It carries out the reaction XMP + L-glutamine + ATP + H2O = GMP + L-glutamate + AMP + diphosphate + 2 H(+). The protein operates within purine metabolism; GMP biosynthesis; GMP from XMP (L-Gln route): step 1/1. Its function is as follows. Catalyzes the synthesis of GMP from XMP. The chain is GMP synthase [glutamine-hydrolyzing] from Wigglesworthia glossinidia brevipalpis.